We begin with the raw amino-acid sequence, 256 residues long: MIHAFAVSVIRHERTLLEQINFRLNPGELVVTLGPNGAGKSTLLKTLAGDLPPSHGHVLLDDEPISQFSLSQLSRRRAVLSQSVHLDFPFSAMEVVLMGAQRTLSGGDPFRLSQQALEEVDAGHLAQRNYQDLSGGERQRVQIARALTQLWTGVGAGPQYLMLDEPTSALDLKHQSALLKLARKLAGKGVGVFCVLHDLHLAAQYADRILLMNHGRIVAEGAPETLITTANVREVYQVDSRILPHPVTQRPMVMID.

The ABC transporter domain occupies Ile2 to Asp239. Position 34 to 41 (Gly34 to Ser41) interacts with ATP.

Belongs to the ABC transporter superfamily. Heme (hemin) importer (TC 3.A.1.14.5) family. In terms of assembly, the complex is composed of two ATP-binding proteins (HmuV), two transmembrane proteins (HmuU) and a solute-binding protein (HmuT).

Its subcellular location is the cell inner membrane. Part of the ABC transporter complex HmuTUV involved in hemin import. Responsible for energy coupling to the transport system. The polypeptide is Hemin import ATP-binding protein HmuV (Hahella chejuensis (strain KCTC 2396)).